The chain runs to 504 residues: MLFLEVKFLDLDLEANAVIINEEDIKGTAYYSQDRVLIESKTCSFIGTLQSTKTMIKPGEVGVSKYIKDVKLNEGEEVRVRHAQKPQSVSYIRKKMNGQTLTADEIHTIIDEIVSKKLTNVELSAFLVSTYIRGMNTEEIVAMTKRMAETGDTIQWEKRPVVDVHSIGGVPGNKYALLTIPIVAAAGMTIPKTSSRAITSAAGTADVLEVITNVNLSCEEIQRVAKTTGGCLAWGGAVNLAPADDIIINVERPLSIDPQPQLLASVMAKKIATGIDYTVIDIPVGYGVKIKNEKEGNQLARKFIELGELLGIRVECVLTYGGQPIGRAIGPALEIKEALMALHDPKSAPNSLIEKSVSLAGVLLELGGRAQIGQGQKVAWEILESGKALEKFNEIVVEQGGTITKPEEIELGEYTMDIRSPKDGYVTGISNKLITKLAKEAGCPKDKKAGIFLGVKTGNKVNKEDILYTIYSSSEERLDAAVNFARRTYPIKVEGMMLKRLSKF.

Residues Gly169, Ser195–Ser200, and Thr204 contribute to the AMP site. The Proton donor role is filled by Asp257. The AMP site is built by Ser265 and Lys289.

Belongs to the thymidine/pyrimidine-nucleoside phosphorylase family. Type 2 subfamily.

It carries out the reaction AMP + phosphate = alpha-D-ribose 1,5-bisphosphate + adenine. It catalyses the reaction CMP + phosphate = cytosine + alpha-D-ribose 1,5-bisphosphate. The catalysed reaction is UMP + phosphate = alpha-D-ribose 1,5-bisphosphate + uracil. Functionally, catalyzes the conversion of AMP and phosphate to adenine and ribose 1,5-bisphosphate (R15P). Exhibits phosphorylase activity toward CMP and UMP in addition to AMP. Functions in an archaeal AMP degradation pathway, together with R15P isomerase and RubisCO. In Methanococcus aeolicus (strain ATCC BAA-1280 / DSM 17508 / OCM 812 / Nankai-3), this protein is AMP phosphorylase.